Here is a 177-residue protein sequence, read N- to C-terminus: Inner membrane-spanning protein YciB (177 aa).

5 consecutive transmembrane segments (helical) span residues 23–43, 50–70, 73–93, 119–139, and 149–169; these read MFVATGVAIAATAVMVAWAWF, TMQWISLGLIVVLGGATLLLH, HFIMWKPTVLYWVMGAGLLIS, LTWAWSGFFAFMGALNLFVAY, and FKLFGGMGLMLLFVIAQSLFL.

The protein belongs to the YciB family.

It localises to the cell inner membrane. Its function is as follows. Plays a role in cell envelope biogenesis, maintenance of cell envelope integrity and membrane homeostasis. The sequence is that of Inner membrane-spanning protein YciB from Chromobacterium violaceum (strain ATCC 12472 / DSM 30191 / JCM 1249 / CCUG 213 / NBRC 12614 / NCIMB 9131 / NCTC 9757 / MK).